The sequence spans 513 residues: Tyrosine-protein phosphatase non-receptor type substrate 1 (513 aa).

The first 31 residues, 1-31 (MEPAGPAPGRLGPLLLCLLLSASCFCTGATG), serve as a signal peptide directing secretion. The Ig-like V-type domain occupies 32 to 137 (KELKVTQPEK…SSEPDTEIQS (106 aa)). Topologically, residues 32–373 (KELKVTQPEK…PDNNATHNWN (342 aa)) are extracellular. N-linked (GlcNAc...) asparagine glycosylation is found at Asn54, Asn92, Asn168, Asn180, Asn205, Asn209, Asn246, Asn271, Asn293, Asn302, Asn312, Asn320, Asn345, and Asn367. Cys55 and Cys121 are oxidised to a cystine. Ig-like C1-type domains lie at 149 to 248 (PSPP…ANLS) and 255 to 343 (PTVK…PAIT). Cysteines 171 and 229 form a disulfide. A disulfide bridge links Cys274 with Cys332. A helical membrane pass occupies residues 374-394 (VFIGVGVACALLVVLLMAALY). Over 395–511 (LLRIKQKKAK…FSEYASVQVQ (117 aa)) the chain is Cytoplasmic. Phosphotyrosine; by Tyr-kinases is present on Tyr440. The short motif at 440–443 (YADL) is the SH2-binding element. The tract at residues 444 to 513 (NLPKEKKPAP…EYASVQVQRK (70 aa)) is disordered. Residues 450-455 (KPAPRA) carry the SH3-binding motif. 3 positions are modified to phosphotyrosine; by Tyr-kinases: Tyr464, Tyr481, and Tyr505. Short sequence motifs (SH2-binding) lie at residues 464–467 (YASI), 481–484 (YADL), and 505–508 (YASV). The segment covering 504-513 (EYASVQVQRK) has biased composition (polar residues).

In terms of assembly, binds PTPN11 when tyrosine-phosphorylated, except in macrophages, where it primarily binds PTPN6. Binds GRB2 vitro. Binds FGR. Binds JAK2 irrespective of its phosphorylation status and forms a stable complex. Binds SCAP1 and/or SCAP2. The resulting complex recruits FYB1. Binds PTK2B. Interacts with TRIM2. Post-translationally, N-glycosylated. In terms of processing, phosphorylated on tyrosine residues. Highly expressed in cerebral cortex, brain, spinal cord, cerebellum and spleen, and at much lower levels in kidney, thymus, heart, lung and liver. Within the cerebellum, highly expressed throughout the molecular layer, and in synaptic glomeruli in the granule cell layer. Detected in neurons of the hippocampus and dentate gyrus, and in olfactory bulb. Not detected in Purkinje cells. Highly expressed in the plexiform layers, optic fiber layer and the outer segments of the photoreceptor layer in the retina. Highly expressed in macrophages. Isoform 3 is detected at very low levels in all tissues tested.

Its subcellular location is the membrane. In terms of biological role, immunoglobulin-like cell surface receptor for CD47. Acts as a docking protein and induces translocation of PTPN6, PTPN11 and other binding partners from the cytosol to the plasma membrane. Supports adhesion of cerebellar neurons, neurite outgrowth and glial cell attachment. May play a key role in intracellular signaling during synaptogenesis and in synaptic function. Involved in the negative regulation of receptor tyrosine kinase-coupled cellular responses induced by cell adhesion, growth factors or insulin. Mediates negative regulation of phagocytosis, mast cell activation and dendritic cell activation. CD47 binding prevents maturation of immature dendritic cells and inhibits cytokine production by mature dendritic cells. Plays a role in antiviral immunity and limits new world arenavirus infection by decreasing virus internalization. Receptor for THBS1. Interaction with THBS1 stimulates phosphorylation of SIRPA. In response to THBS1, involved in ROS signaling in non-phagocytic cells, stimulating NADPH oxidase-derived ROS production. This chain is Tyrosine-protein phosphatase non-receptor type substrate 1 (Sirpa), found in Mus musculus (Mouse).